The following is a 241-amino-acid chain: 3-deoxy-D-manno-octulosonic acid kinase (241 aa).

Residue D171 is part of the active site.

This sequence belongs to the protein kinase superfamily. KdkA/RfaP family.

The protein resides in the cell inner membrane. The enzyme catalyses an alpha-Kdo-(2-&gt;6)-lipid IVA + ATP = a 4-O-phospho-alpha-Kdo-(2-&gt;6)-lipid IVA + ADP + H(+). The protein operates within bacterial outer membrane biogenesis; LPS core biosynthesis. Functionally, catalyzes the ATP-dependent phosphorylation of the 3-deoxy-D-manno-octulosonic acid (Kdo) residue in Kdo-lipid IV(A) at the 4-OH position. The polypeptide is 3-deoxy-D-manno-octulosonic acid kinase (Haemophilus influenzae (strain PittGG)).